The chain runs to 424 residues: Gamma-glutamyl phosphate reductase (424 aa).

Belongs to the gamma-glutamyl phosphate reductase family.

It is found in the cytoplasm. It carries out the reaction L-glutamate 5-semialdehyde + phosphate + NADP(+) = L-glutamyl 5-phosphate + NADPH + H(+). It functions in the pathway amino-acid biosynthesis; L-proline biosynthesis; L-glutamate 5-semialdehyde from L-glutamate: step 2/2. Functionally, catalyzes the NADPH-dependent reduction of L-glutamate 5-phosphate into L-glutamate 5-semialdehyde and phosphate. The product spontaneously undergoes cyclization to form 1-pyrroline-5-carboxylate. The polypeptide is Gamma-glutamyl phosphate reductase (Parvibaculum lavamentivorans (strain DS-1 / DSM 13023 / NCIMB 13966)).